The chain runs to 101 residues: NAD(P)H-quinone oxidoreductase subunit 4L, chloroplastic (101 aa).

Helical transmembrane passes span I2 to I22, M32 to F52, and I61 to V81.

It belongs to the complex I subunit 4L family. As to quaternary structure, NDH is composed of at least 16 different subunits, 5 of which are encoded in the nucleus.

It is found in the plastid. Its subcellular location is the chloroplast thylakoid membrane. The catalysed reaction is a plastoquinone + NADH + (n+1) H(+)(in) = a plastoquinol + NAD(+) + n H(+)(out). It carries out the reaction a plastoquinone + NADPH + (n+1) H(+)(in) = a plastoquinol + NADP(+) + n H(+)(out). NDH shuttles electrons from NAD(P)H:plastoquinone, via FMN and iron-sulfur (Fe-S) centers, to quinones in the photosynthetic chain and possibly in a chloroplast respiratory chain. The immediate electron acceptor for the enzyme in this species is believed to be plastoquinone. Couples the redox reaction to proton translocation, and thus conserves the redox energy in a proton gradient. This chain is NAD(P)H-quinone oxidoreductase subunit 4L, chloroplastic, found in Olimarabidopsis pumila (Dwarf rocket).